The sequence spans 194 residues: Large ribosomal subunit protein bL9 (194 aa).

A disordered region spans residues 169–194; it reads DDINDNARPENFFDPNAEFDGGEDNA.

The protein belongs to the bacterial ribosomal protein bL9 family.

Binds to the 23S rRNA. The chain is Large ribosomal subunit protein bL9 from Mesorhizobium japonicum (strain LMG 29417 / CECT 9101 / MAFF 303099) (Mesorhizobium loti (strain MAFF 303099)).